The sequence spans 497 residues: Angiopoietin-1 (497 aa).

An N-terminal signal peptide occupies residues 1–15; that stretch reads MTVFLSFAFLAAILT. N-linked (GlcNAc...) asparagine glycosylation is found at N92, N122, N154, N243, and N294. Residues 153–261 adopt a coiled-coil conformation; that stretch reads LNQTSRLEIQ…LELMDTVHNL (109 aa). The Fibrinogen C-terminal domain maps to 276-496; it reads KEEEKPFRDC…STTMMIRPLD (221 aa). 2 disulfides stabilise this stretch: C285/C314 and C438/C451.

As to quaternary structure, homooligomer. Interacts with TEK/TIE2. Interacts with SVEP1/polydom. Interacts with THBD; this interaction significantly inhibits the generation of activated PC and TAFIa/CPB2 by the thrombin/thrombomodulin complex.

It localises to the secreted. Its function is as follows. Binds and activates TIE2 receptor by inducing its tyrosine phosphorylation. Implicated in endothelial developmental processes later and distinct from that of VEGF. Appears to play a crucial role in mediating reciprocal interactions between the endothelium and surrounding matrix and mesenchyme. Mediates blood vessel maturation/stability. It may play an important role in the heart early development. This Bos taurus (Bovine) protein is Angiopoietin-1 (ANGPT1).